The sequence spans 103 residues: Histone H4 (103 aa).

Positions 1–14 are enriched in gly residues; that stretch reads MSGRGKGGKGLGKG. The segment at 1–20 is disordered; that stretch reads MSGRGKGGKGLGKGGAKRHR. N-acetylserine is present on serine 2. The residue at position 17 (lysine 17) is an N6-acetyllysine. Residues 17-21 mediate DNA binding; it reads KRHRK. Lysine 21 bears the N6-methyllysine mark.

The protein belongs to the histone H4 family. As to quaternary structure, the nucleosome is a histone octamer containing two molecules each of H2A, H2B, H3 and H4 assembled in one H3-H4 heterotetramer and two H2A-H2B heterodimers. The octamer wraps approximately 147 bp of DNA.

The protein resides in the nucleus. It localises to the chromosome. Core component of nucleosome. Nucleosomes wrap and compact DNA into chromatin, limiting DNA accessibility to the cellular machineries which require DNA as a template. Histones thereby play a central role in transcription regulation, DNA repair, DNA replication and chromosomal stability. DNA accessibility is regulated via a complex set of post-translational modifications of histones, also called histone code, and nucleosome remodeling. This Capsicum annuum (Capsicum pepper) protein is Histone H4.